A 176-amino-acid polypeptide reads, in one-letter code: Cytochrome c oxidase subunit 5b-1, mitochondrial (176 aa).

The transit peptide at 1-55 (MWRRIVSSQLKTLAADVVAASPRRSIAATTRPVGFYLAANRSAISASSFVIPRRF) directs the protein to the mitochondrion. Positions 122, 146, and 149 each coordinate Zn(2+). The interval 157-176 (VVGPGGPPDGHGDEDDEHHH) is disordered.

Belongs to the cytochrome c oxidase subunit 5B (TC 3.D.4.11) family.

Its subcellular location is the mitochondrion inner membrane. This protein is one of the nuclear-coded polypeptide chains of cytochrome c oxidase, the terminal oxidase in mitochondrial electron transport. This Arabidopsis thaliana (Mouse-ear cress) protein is Cytochrome c oxidase subunit 5b-1, mitochondrial (COX5B-1).